Here is a 128-residue protein sequence, read N- to C-terminus: Sulfurtransferase TusD (128 aa).

Residue Cys-78 is the Cysteine persulfide intermediate of the active site.

Belongs to the DsrE/TusD family. As to quaternary structure, heterohexamer, formed by a dimer of trimers. The hexameric TusBCD complex contains 2 copies each of TusB, TusC and TusD. The TusBCD complex interacts with TusE.

Its subcellular location is the cytoplasm. Part of a sulfur-relay system required for 2-thiolation of 5-methylaminomethyl-2-thiouridine (mnm(5)s(2)U) at tRNA wobble positions. Accepts sulfur from TusA and transfers it in turn to TusE. In Shigella dysenteriae serotype 1 (strain Sd197), this protein is Sulfurtransferase TusD.